Consider the following 314-residue polypeptide: Ribosomal RNA small subunit methyltransferase H (314 aa).

Residues 36–38 (GGH), Asp-56, Phe-80, Asp-102, and Gln-109 each bind S-adenosyl-L-methionine.

The protein belongs to the methyltransferase superfamily. RsmH family.

It localises to the cytoplasm. It carries out the reaction cytidine(1402) in 16S rRNA + S-adenosyl-L-methionine = N(4)-methylcytidine(1402) in 16S rRNA + S-adenosyl-L-homocysteine + H(+). Its function is as follows. Specifically methylates the N4 position of cytidine in position 1402 (C1402) of 16S rRNA. In Citrobacter koseri (strain ATCC BAA-895 / CDC 4225-83 / SGSC4696), this protein is Ribosomal RNA small subunit methyltransferase H.